Here is a 628-residue protein sequence, read N- to C-terminus: Glutamine--fructose-6-phosphate aminotransferase [isomerizing] (628 aa).

Cysteine 2 serves as the catalytic Nucleophile; for GATase activity. In terms of domain architecture, Glutamine amidotransferase type-2 spans cysteine 2–aspartate 229. The disordered stretch occupies residues glutamate 61–proline 94. 2 SIS domains span residues serine 301–threonine 440 and leucine 473–proline 618. The active-site For Fru-6P isomerization activity is the lysine 623.

In terms of assembly, homodimer.

The protein resides in the cytoplasm. The enzyme catalyses D-fructose 6-phosphate + L-glutamine = D-glucosamine 6-phosphate + L-glutamate. In terms of biological role, catalyzes the first step in hexosamine metabolism, converting fructose-6P into glucosamine-6P using glutamine as a nitrogen source. The sequence is that of Glutamine--fructose-6-phosphate aminotransferase [isomerizing] from Mycolicibacterium smegmatis (strain ATCC 700084 / mc(2)155) (Mycobacterium smegmatis).